Reading from the N-terminus, the 278-residue chain is Mediator of RNA polymerase II transcription subunit 4 (278 aa).

A coiled-coil region spans residues 57–88; that stretch reads HARILTLRAQVEALEEQKKSSVTALATLRHEL. Disordered regions lie at residues 120-181 and 240-278; these read VPPT…EEEE and VEAP…DLDD. 2 stretches are compositionally biased toward basic and acidic residues: residues 124 to 142 and 160 to 172; these read YRER…KDDA and DAPK…DNKP. Residues 250-268 show a composition bias toward low complexity; that stretch reads AEPVQAQAPRPARPAQPQA.

This sequence belongs to the Mediator complex subunit 4 family. Component of the Mediator complex.

The protein resides in the nucleus. Functionally, component of the Mediator complex, a coactivator involved in the regulated transcription of nearly all RNA polymerase II-dependent genes. Mediator functions as a bridge to convey information from gene-specific regulatory proteins to the basal RNA polymerase II transcription machinery. Mediator is recruited to promoters by direct interactions with regulatory proteins and serves as a scaffold for the assembly of a functional preinitiation complex with RNA polymerase II and the general transcription factors. The chain is Mediator of RNA polymerase II transcription subunit 4 (MED4) from Phaeosphaeria nodorum (strain SN15 / ATCC MYA-4574 / FGSC 10173) (Glume blotch fungus).